Here is a 166-residue protein sequence, read N- to C-terminus: Interferon gamma (166 aa).

An N-terminal signal peptide occupies residues 1–23; that stretch reads MKYTSSFLALLLCVLLGFSGSYG. The residue at position 24 (glutamine 24) is a Pyrrolidone carboxylic acid. Asparagine 39 and asparagine 106 each carry an N-linked (GlcNAc...) asparagine glycan.

The protein belongs to the type II (or gamma) interferon family. Homodimer. Interacts with IFNGR1 (via extracellular domain); this interaction promotes IFNGR1 dimerization. As to expression, released primarily from activated T lymphocytes.

The protein localises to the secreted. In terms of biological role, type II interferon produced by immune cells such as T-cells and NK cells that plays crucial roles in antimicrobial, antiviral, and antitumor responses by activating effector immune cells and enhancing antigen presentation. Primarily signals through the JAK-STAT pathway after interaction with its receptor IFNGR1 to affect gene regulation. Upon IFNG binding, IFNGR1 intracellular domain opens out to allow association of downstream signaling components JAK2, JAK1 and STAT1, leading to STAT1 activation, nuclear translocation and transcription of IFNG-regulated genes. Many of the induced genes are transcription factors such as IRF1 that are able to further drive regulation of a next wave of transcription. Plays a role in class I antigen presentation pathway by inducing a replacement of catalytic proteasome subunits with immunoproteasome subunits. In turn, increases the quantity, quality, and repertoire of peptides for class I MHC loading. Increases the efficiency of peptide generation also by inducing the expression of activator PA28 that associates with the proteasome and alters its proteolytic cleavage preference. Up-regulates as well MHC II complexes on the cell surface by promoting expression of several key molecules such as cathepsins B/CTSB, H/CTSH, and L/CTSL. Participates in the regulation of hematopoietic stem cells during development and under homeostatic conditions by affecting their development, quiescence, and differentiation. This chain is Interferon gamma (IFNG), found in Ovis aries (Sheep).